Reading from the N-terminus, the 171-residue chain is Small ribosomal subunit protein uS13 (171 aa).

Disordered regions lie at residues 1 to 22 and 142 to 171; these read MGKASANNVKSDKEAAKPAAKK and RHEKGKKVRGQRTRSNGRRGLSIGVVRKKE. Over residues 10-22 the composition is skewed to basic and acidic residues; that stretch reads KSDKEAAKPAAKK. Basic residues predominate over residues 142 to 158; that stretch reads RHEKGKKVRGQRTRSNG.

Belongs to the universal ribosomal protein uS13 family. Part of the 30S ribosomal subunit. Forms a loose heterodimer with protein S19. Forms two bridges to the 50S subunit in the 70S ribosome.

In terms of biological role, located at the top of the head of the 30S subunit, it contacts several helices of the 16S rRNA. In the 70S ribosome it contacts the 23S rRNA (bridge B1a) and protein L5 of the 50S subunit (bridge B1b), connecting the 2 subunits; these bridges are implicated in subunit movement. The sequence is that of Small ribosomal subunit protein uS13 from Thermoplasma volcanium (strain ATCC 51530 / DSM 4299 / JCM 9571 / NBRC 15438 / GSS1).